A 1070-amino-acid chain; its full sequence is DNA-directed RNA polymerase subunit beta (1070 aa).

It belongs to the RNA polymerase beta chain family. As to quaternary structure, in plastids the minimal PEP RNA polymerase catalytic core is composed of four subunits: alpha, beta, beta', and beta''. When a (nuclear-encoded) sigma factor is associated with the core the holoenzyme is formed, which can initiate transcription.

Its subcellular location is the plastid. The protein resides in the chloroplast. The catalysed reaction is RNA(n) + a ribonucleoside 5'-triphosphate = RNA(n+1) + diphosphate. In terms of biological role, DNA-dependent RNA polymerase catalyzes the transcription of DNA into RNA using the four ribonucleoside triphosphates as substrates. The chain is DNA-directed RNA polymerase subunit beta from Nicotiana sylvestris (Wood tobacco).